A 430-amino-acid polypeptide reads, in one-letter code: Adenylosuccinate synthetase (430 aa).

GTP contacts are provided by residues 12–18 (GDEGKGK) and 40–42 (GHT). Residue D13 is the Proton acceptor of the active site. Positions 13 and 40 each coordinate Mg(2+). IMP is bound by residues 13–16 (DEGK), 38–41 (NAGH), T130, R144, Q224, T239, and R303. H41 acts as the Proton donor in catalysis. Residue 299 to 305 (VVTGRPR) coordinates substrate. GTP-binding positions include R305, 331–333 (KLD), and 413–415 (STS).

It belongs to the adenylosuccinate synthetase family. As to quaternary structure, homodimer. Mg(2+) is required as a cofactor.

It is found in the cytoplasm. It carries out the reaction IMP + L-aspartate + GTP = N(6)-(1,2-dicarboxyethyl)-AMP + GDP + phosphate + 2 H(+). The protein operates within purine metabolism; AMP biosynthesis via de novo pathway; AMP from IMP: step 1/2. Its function is as follows. Plays an important role in the de novo pathway of purine nucleotide biosynthesis. Catalyzes the first committed step in the biosynthesis of AMP from IMP. The polypeptide is Adenylosuccinate synthetase (Azorhizobium caulinodans (strain ATCC 43989 / DSM 5975 / JCM 20966 / LMG 6465 / NBRC 14845 / NCIMB 13405 / ORS 571)).